The following is an 883-amino-acid chain: Brevican core protein (883 aa).

The N-terminal stretch at 1–22 (MIPLLLSLLAALVLTQAPAALA) is a signal peptide. In terms of domain architecture, Ig-like V-type spans 35 to 154 (FRVRIGAAQL…SSDAVEVKVK (120 aa)). 5 cysteine pairs are disulfide-bonded: Cys56/Cys136, Cys178/Cys249, Cys202/Cys223, Cys276/Cys351, and Cys300/Cys321. Asn129 is a glycosylation site (N-linked (GlcNAc...) asparagine). Link domains follow at residues 156–251 (VVFL…YCYA) and 256–353 (GELF…YCFR). Asn336 carries an N-linked (GlcNAc...) asparagine glycan. The interval 389-574 (QEAVESESRG…EDGPSLLPET (186 aa)) is disordered. Ser413 is subject to Phosphoserine. O-linked (Xyl...) (chondroitin sulfate) serine glycosylation is present at Ser413. Residues 428 to 440 (ESETQSVAPPTGS) are compositionally biased toward polar residues. Residues 441–451 (SEEEGEALEEE) show a composition bias toward acidic residues. Over residues 452–467 (ERFKDTETPKEEKEQE) the composition is skewed to basic and acidic residues. Ser622 carries the GPI-anchor amidated serine lipid modification. Positions 622 to 658 (SSGDCIPSPCHNGGTCLEEKEGFRCLCVPGYGGDLCD) constitute an EGF-like domain. Cystine bridges form between Cys626/Cys637, Cys631/Cys646, Cys648/Cys657, Cys692/Cys784, Cys760/Cys776, Cys791/Cys834, and Cys820/Cys847. In terms of domain architecture, C-type lectin spans 658 to 786 (DVGLHFCSPG…NYHLSYTCKM (129 aa)). Residues 789–849 (VSCGPPPQLP…WEAPQISCVP (61 aa)) form the Sushi domain. The interval 859–883 (MTAPEGPRGQLPRQRKALLTPPSSL) is disordered.

Belongs to the aggrecan/versican proteoglycan family. Interacts with TNR. Post-translationally, O-glycosylated; contains chondroitin sulfate. In terms of tissue distribution, brain.

Its subcellular location is the secreted. The protein resides in the extracellular space. It is found in the extracellular matrix. It localises to the membrane. Its function is as follows. May play a role in the terminally differentiating and the adult nervous system during postnatal development. Could stabilize interactions between hyaluronan (HA) and brain proteoglycans. Isoform 2 may function as a chondroitin sulfate-bearing cell surface receptor. The polypeptide is Brevican core protein (Bcan) (Rattus norvegicus (Rat)).